The primary structure comprises 143 residues: Turripeptide VIII-01 (143 aa).

A signal peptide spans 1–23; that stretch reads MALSLDILMSVTMVTAVLTTVNA. The propeptide occupies 24–32; that stretch reads EYKDSRLDS.

In terms of processing, contains 4 disulfide bonds. Expressed by the venom duct.

The protein localises to the secreted. This Gemmula speciosa (Splendid gem-turris) protein is Turripeptide VIII-01.